A 122-amino-acid chain; its full sequence is Large ribosomal subunit protein bL12 (122 aa).

Belongs to the bacterial ribosomal protein bL12 family. As to quaternary structure, homodimer. Part of the ribosomal stalk of the 50S ribosomal subunit. Forms a multimeric L10(L12)X complex, where L10 forms an elongated spine to which 2 to 4 L12 dimers bind in a sequential fashion. Binds GTP-bound translation factors.

Forms part of the ribosomal stalk which helps the ribosome interact with GTP-bound translation factors. Is thus essential for accurate translation. In Streptococcus pneumoniae serotype 19F (strain G54), this protein is Large ribosomal subunit protein bL12.